The primary structure comprises 239 residues: Homeobox-leucine zipper protein HOX12 (239 aa).

The disordered stretch occupies residues 25 to 65; that stretch reads ATSGGEQKKARQRRRRKVKPEAAAALAGESGGDEQAKKRRL. The segment at residues 58 to 117 is a DNA-binding region (homeobox); sequence EQAKKRRLSDEQARFLEMSFKKERKLETPRKVQLAAELGLDAKQVAVWFQNRRARHKSKL. Residues 107 to 168 adopt a coiled-coil conformation; sequence QNRRARHKSK…KLAAVAAATT (62 aa).

The protein belongs to the HD-ZIP homeobox family. Class I subfamily. Expressed in seedlings, roots, stems, leaf sheaths and panicles.

Its subcellular location is the nucleus. Functionally, probable transcription factor. This chain is Homeobox-leucine zipper protein HOX12 (HOX12), found in Oryza sativa subsp. japonica (Rice).